The following is a 305-amino-acid chain: Serine/threonine-protein phosphatase PP1-delta (305 aa).

Mn(2+) is bound by residues Asp-62, His-64, Asp-90, and Asn-122. The active-site Proton donor is the His-123. His-172 and His-247 together coordinate Mn(2+).

This sequence belongs to the PPP phosphatase family. In terms of tissue distribution, expressed in male germline including spermatocytes, spermatids and spermatozoa.

It localises to the chromosome. It is found in the cell projection. Its subcellular location is the pseudopodium. The protein localises to the cytoplasm. It carries out the reaction O-phospho-L-seryl-[protein] + H2O = L-seryl-[protein] + phosphate. It catalyses the reaction O-phospho-L-threonyl-[protein] + H2O = L-threonyl-[protein] + phosphate. Its function is as follows. Probable phosphatase which plays a redundant role with gsp-4 in spermatogenesis by regulating sister chromatid segregation during meiosis. In addition, involved in sperm motility by controlling the dynamic disassembly of major sperm proteins (MSP) in the spermatozoan pseudopodium. The polypeptide is Serine/threonine-protein phosphatase PP1-delta (Caenorhabditis elegans).